Reading from the N-terminus, the 187-residue chain is Meiotically up-regulated protein C1442.13c (187 aa).

Disordered regions lie at residues 15–46 (QWEN…LSNE) and 119–145 (IQEG…PAIN). The segment covering 26 to 41 (PPRKPKIVQPKKKPSK) has biased composition (basic residues). Residues 145–187 (NNGKGKQLLEMMGWSRGKGLGSENQGMVDPVVAVVKNNKQGLH) enclose the G-patch domain.

It is found in the nucleus. The protein localises to the cytoplasm. It localises to the cytoskeleton. The protein resides in the microtubule organizing center. Its subcellular location is the spindle pole body. Its function is as follows. Has a role in meiosis and sporulation. Required for meiotic chromosome segregation. This is Meiotically up-regulated protein C1442.13c from Schizosaccharomyces pombe (strain 972 / ATCC 24843) (Fission yeast).